The following is an 888-amino-acid chain: Glutamate receptor 3 (888 aa).

The signal sequence occupies residues 1–22 (MGQSVLRAVFFLVLGLLGHSHG). The Extracellular portion of the chain corresponds to 23–546 (GFPNTISIGG…GVFSFLDPLA (524 aa)). N-linked (GlcNAc...) asparagine glycosylation is found at asparagine 57, asparagine 260, asparagine 374, asparagine 409, and asparagine 416. An intrachain disulfide couples cysteine 85 to cysteine 334. The L-glutamate site is built by proline 502, threonine 504, and arginine 509. The helical transmembrane segment at 547-567 (YEIWMCIVFAYIGVSVVLFLV) threads the bilayer. Topologically, residues 568-596 (SRFSPYEWHLEDNNEEPRDPQSPPDPPNE) are cytoplasmic. Positions 597-612 (FGIFNSLWFSLGAFMQ) form an intramembrane region, helical; Pore-forming. An intramembrane segment occupies 613–615 (QGC). The S-palmitoyl cysteine moiety is linked to residue cysteine 615. Topologically, residues 616–621 (DISPRS) are cytoplasmic. The helical transmembrane segment at 622 to 642 (LSGRIVGGVWWFFTLIIISSY) threads the bilayer. The Extracellular portion of the chain corresponds to 643–817 (TANLAAFLTV…DKTSALSLSN (175 aa)). Residues serine 680, threonine 681, and glutamate 731 each coordinate L-glutamate. A disulfide bridge connects residues cysteine 744 and cysteine 799. A helical membrane pass occupies residues 818–838 (VAGVFYILVGGLGLAMMVALI). Residues 839–888 (EFCYKSRAESKRMKLTKNTQNFKPAPATNTQNYATYREGYNVYGTESVKI) are Cytoplasmic-facing. The S-palmitoyl cysteine moiety is linked to residue cysteine 841. Tyrosine 871 and tyrosine 881 each carry phosphotyrosine.

The protein belongs to the glutamate-gated ion channel (TC 1.A.10.1) family. GRIA3 subfamily. As to quaternary structure, homotetramer or heterotetramer of pore-forming glutamate receptor subunits. Tetramers may be formed by the dimerization of dimers. Interacts with PICK1, GRIP1 and GRIP2. Found in a complex with GRIA1, GRIA2, GRIA4, CNIH2, CNIH3, CACNG2, CACNG3, CACNG4, CACNG5, CACNG7 and CACNG8. Interacts with CACNG5. Found in a complex with GRIA1, GRIA2, GRIA4, DLG4, CACNG8 and CNIH2.

Its subcellular location is the cell membrane. It is found in the postsynaptic cell membrane. The protein localises to the postsynaptic density membrane. The catalysed reaction is Ca(2+)(in) = Ca(2+)(out). Its function is as follows. Ionotropic glutamate receptor that functions as a ligand-gated cation channel, gated by L-glutamate and glutamatergic agonists such as alpha-amino-3-hydroxy-5-methyl-4-isoxazolepropionic acid (AMPA), quisqualic acid, and kainic acid. L-glutamate acts as an excitatory neurotransmitter at many synapses in the central nervous system and plays an important role in fast excitatory synaptic transmission by inducing long-term potentiation. Binding of the excitatory neurotransmitter L-glutamate induces a conformation change, leading to the opening of the cation channel, and thereby converts the chemical signal to an electrical impulse upon entry of calcium. The receptor then desensitizes rapidly and enters a transient inactive state, characterized by the presence of bound agonist. In the presence of CACNG8, shows resensitization which is characterized by a delayed accumulation of current flux upon continued application of glutamate. In Rattus norvegicus (Rat), this protein is Glutamate receptor 3.